The sequence spans 506 residues: Protein EFFECTOR OF TRANSCRIPTION 1 (506 aa).

The 41-residue stretch at 185–225 (AFQGLYELSHDHGRKDDVLVANLGQPESIRSRLRSYSRSFA) folds into the GIY-YIG domain. Positions 234-247 (LSQTILPTTQNKSD) are enriched in polar residues. The segment at 234–298 (LSQTILPTTQ…VSEKHDDIVD (65 aa)) is disordered. Residues 248 to 272 (NQTEEKKSDSEEEREVSSDAAEKES) show a composition bias toward basic and acidic residues. The span at 273-288 (NSLPSILRLSRSRPQP) shows a compositional bias: low complexity. 2 Cx9Cx9RCx2HK repeats span residues 306-331 (CGVLLEDGTTCTTTPVKGRKRCTEHK) and 361-386 (CGVILPDMIRCRSKPVSRRKRCEDHK). Over residues 404-413 (KAVNEDKSKP) the composition is skewed to basic and acidic residues. Residues 404 to 426 (KAVNEDKSKPETSTGMNQEGSGL) are disordered. A compositionally biased stretch (polar residues) spans 414-423 (ETSTGMNQEG). Cx9Cx9RCx2HK repeat units lie at residues 428 to 453 (CEATTKNGLPCTRSAPEGSKRCWQHK) and 475 to 500 (CGFKLYNGSVCEKSPVKGRKRCEEHK).

Expressed in rosette leaves, stipules, stems, flowers, siliques and mature seeds. Expressed in the vascular bundles of xylem in shoot parenchyma cells. Expressed in the remnant cytoplasm of differentiated fiber cells and in protoxylem element of parenchymal cells.

The protein localises to the cytoplasm. It localises to the nucleus. Its function is as follows. Transcriptional regulator involved in the regulation of cell differentiation in meristems. Binds DNA without sequence preference. In Arabidopsis thaliana (Mouse-ear cress), this protein is Protein EFFECTOR OF TRANSCRIPTION 1.